The following is a 545-amino-acid chain: E3 ubiquitin-protein ligase ipaH9.8 (545 aa).

Residues 1 to 242 (MLPINNNFSL…YHGPRIYFSM (242 aa)) are interaction with target proteins. 8 LRR repeats span residues 57–77 (NSDE…NLPA), 78–99 (QITL…PVTL), 100–117 (KKLY…VLPP), 118–139 (ALES…PDSL), 140–157 (LTMN…SLPQ), 158–179 (ALKN…SEGN), 182–203 (VVRE…ILNL), and 205–228 (NECS…QRLT). The interval 243–250 (SDGQQNTL) is linker. The segment at 251–545 (HRPLADAVTA…SENGSQLHHS (295 aa)) is E3 ubiquitin-protein ligase catalytic domain. One can recognise an NEL domain in the interval 253–545 (PLADAVTAWF…SENGSQLHHS (293 aa)). The Glycyl thioester intermediate role is filled by C337.

It belongs to the LRR-containing bacterial E3 ligase family. As to quaternary structure, also interacts with human and mouse U2AF1 (U2AF35). Post-translationally, ubiquitinated in the presence of host E1 ubiquitin-activating enzyme, E2 ubiquitin-conjugating enzyme and ubiquitin.

The protein resides in the secreted. It localises to the host cytoplasm. Its subcellular location is the host nucleus. The catalysed reaction is S-ubiquitinyl-[E2 ubiquitin-conjugating enzyme]-L-cysteine + [acceptor protein]-L-lysine = [E2 ubiquitin-conjugating enzyme]-L-cysteine + N(6)-ubiquitinyl-[acceptor protein]-L-lysine.. Its activity is regulated as follows. Exists in an autoinhibited state in the absence of substrate protein, due to interactions of the leucine-rich repeats with NEL domain. Is activated upon binding to a substrate protein. Its function is as follows. Effector E3 ubiquitin ligase that interferes with host's ubiquitination pathway and modulates the acute inflammatory responses, thus facilitating bacterial colonization within the host cell. Interacts with IKBKG (NEMO) and TNIP1 (ABIN-1), a ubiquitin-binding adapter protein, which results in TNIP1-dependent 'Lys-27'-linked polyubiquitination of IKBKG. Consequently, polyubiquitinated IKBKG undergoes proteasome-dependent degradation, which perturbs NF-kappa-B activation during bacterial infection. Mediates polyubiquitination of host U2AF1, leading to its proteasomal degradation. Catalyzes 'Lys-48'-linked polyubiquitination and subsequent degradation of a subset of host guanylate-binding proteins (GBP1, GBP2, GBP4 and GBP6), thereby suppressing host cell defense. In contrast, host GBP3 and GBP7 are not ubiquitinated by IpaH9.8. Uses UBE2D2 (UBCH5B) as an E2 ubiquitin-conjugating enzyme. This is E3 ubiquitin-protein ligase ipaH9.8 (ipaH9.8) from Shigella dysenteriae serotype 1 (strain Sd197).